The primary structure comprises 343 residues: Protein RecA (343 aa).

An ATP-binding site is contributed by 65-72 (GPESSGKT).

It belongs to the RecA family.

It localises to the cytoplasm. Its function is as follows. Can catalyze the hydrolysis of ATP in the presence of single-stranded DNA, the ATP-dependent uptake of single-stranded DNA by duplex DNA, and the ATP-dependent hybridization of homologous single-stranded DNAs. It interacts with LexA causing its activation and leading to its autocatalytic cleavage. This Campylobacter jejuni subsp. jejuni serotype O:6 (strain 81116 / NCTC 11828) protein is Protein RecA.